Here is a 131-residue protein sequence, read N- to C-terminus: Ribosome-binding factor A (131 aa).

Residues 110–131 are disordered; sequence QMNLGEDNEDNEDKENNDPGEE. Over residues 115-131 the composition is skewed to acidic residues; the sequence is EDNEDNEDKENNDPGEE.

The protein belongs to the RbfA family. Monomer. Binds 30S ribosomal subunits, but not 50S ribosomal subunits or 70S ribosomes.

The protein resides in the cytoplasm. In terms of biological role, one of several proteins that assist in the late maturation steps of the functional core of the 30S ribosomal subunit. Associates with free 30S ribosomal subunits (but not with 30S subunits that are part of 70S ribosomes or polysomes). Required for efficient processing of 16S rRNA. May interact with the 5'-terminal helix region of 16S rRNA. The sequence is that of Ribosome-binding factor A from Natranaerobius thermophilus (strain ATCC BAA-1301 / DSM 18059 / JW/NM-WN-LF).